Consider the following 76-residue polypeptide: uncharacterized protein (76 aa).

The helical transmembrane segment at 40–60 (IVLNLVVLVGVVPLTWMFLGQ) threads the bilayer.

Its subcellular location is the membrane. This is an uncharacterized protein from Dictyostelium discoideum (Social amoeba).